The primary structure comprises 242 residues: 7-cyano-7-deazaguanine synthase (242 aa).

The disordered stretch occupies residues 1–22; the sequence is MNSSSNEKNKDLNRKNFSSKTD. Position 32 to 42 (32 to 42) interacts with ATP; it reads LSGGLDSTTCL. Residues Cys212, Cys221, Cys224, and Cys227 each contribute to the Zn(2+) site.

It belongs to the QueC family. Zn(2+) serves as cofactor.

The catalysed reaction is 7-carboxy-7-deazaguanine + NH4(+) + ATP = 7-cyano-7-deazaguanine + ADP + phosphate + H2O + H(+). It participates in purine metabolism; 7-cyano-7-deazaguanine biosynthesis. In terms of biological role, catalyzes the ATP-dependent conversion of 7-carboxy-7-deazaguanine (CDG) to 7-cyano-7-deazaguanine (preQ(0)). The sequence is that of 7-cyano-7-deazaguanine synthase from Leptospira interrogans serogroup Icterohaemorrhagiae serovar copenhageni (strain Fiocruz L1-130).